The sequence spans 698 residues: Polyribonucleotide nucleotidyltransferase (698 aa).

Aspartate 488 and aspartate 494 together coordinate Mg(2+). Positions 555–614 (PRLLTIRIDPDKIRDVIGKGGATIRALTEETGTTIDISDDGKVTIASADKAAADEARRRI) constitute a KH domain. One can recognise an S1 motif domain in the interval 624-692 (GTVYEGKVSK…RQGRIRLSMK (69 aa)).

This sequence belongs to the polyribonucleotide nucleotidyltransferase family. As to quaternary structure, component of the RNA degradosome, which is a multiprotein complex involved in RNA processing and mRNA degradation. Requires Mg(2+) as cofactor.

The protein resides in the cytoplasm. The enzyme catalyses RNA(n+1) + phosphate = RNA(n) + a ribonucleoside 5'-diphosphate. Its function is as follows. Involved in mRNA degradation. Catalyzes the phosphorolysis of single-stranded polyribonucleotides processively in the 3'- to 5'-direction. The sequence is that of Polyribonucleotide nucleotidyltransferase from Alkalilimnicola ehrlichii (strain ATCC BAA-1101 / DSM 17681 / MLHE-1).